Consider the following 534-residue polypeptide: Bifunctional pantoate ligase/cytidylate kinase (534 aa).

The tract at residues 1–302 (MRLLTTVAAL…LGSTRLIDNT (302 aa)) is pantoate--beta-alanine ligase. Residue 48-55 (MGSLHQGH) coordinates ATP. His55 functions as the Proton donor in the catalytic mechanism. Gln79 lines the (R)-pantoate pocket. Gln79 contacts beta-alanine. 172–175 (GQKD) provides a ligand contact to ATP. Residue Gln178 coordinates (R)-pantoate. ATP contacts are provided by residues Val201 and 209–212 (CSSR). A cytidylate kinase region spans residues 303–534 (ILRDRQPIIA…DYYQQRLSQW (232 aa)).

This sequence in the N-terminal section; belongs to the pantothenate synthetase family. In the C-terminal section; belongs to the cytidylate kinase family. Type 1 subfamily.

It localises to the cytoplasm. It catalyses the reaction (R)-pantoate + beta-alanine + ATP = (R)-pantothenate + AMP + diphosphate + H(+). It carries out the reaction CMP + ATP = CDP + ADP. The enzyme catalyses dCMP + ATP = dCDP + ADP. It participates in cofactor biosynthesis; (R)-pantothenate biosynthesis; (R)-pantothenate from (R)-pantoate and beta-alanine: step 1/1. Catalyzes the condensation of pantoate with beta-alanine in an ATP-dependent reaction via a pantoyl-adenylate intermediate. In terms of biological role, catalyzes the transfer of a phosphate group from ATP to either CMP or dCMP to form CDP or dCDP and ADP, respectively. The chain is Bifunctional pantoate ligase/cytidylate kinase from Nostoc sp. (strain PCC 7120 / SAG 25.82 / UTEX 2576).